A 160-amino-acid polypeptide reads, in one-letter code: Ribosomal RNA large subunit methyltransferase H (160 aa).

S-adenosyl-L-methionine contacts are provided by residues Leu-76, Gly-108, and 127–132 (FGFMTW).

This sequence belongs to the RNA methyltransferase RlmH family. In terms of assembly, homodimer.

Its subcellular location is the cytoplasm. It carries out the reaction pseudouridine(1915) in 23S rRNA + S-adenosyl-L-methionine = N(3)-methylpseudouridine(1915) in 23S rRNA + S-adenosyl-L-homocysteine + H(+). Its function is as follows. Specifically methylates the pseudouridine at position 1915 (m3Psi1915) in 23S rRNA. This Bartonella tribocorum (strain CIP 105476 / IBS 506) protein is Ribosomal RNA large subunit methyltransferase H.